Consider the following 456-residue polypeptide: CBL-interacting protein kinase 9 (456 aa).

Positions 27–282 constitute a Protein kinase domain; sequence YELGKTIGEG…IAQILEDDWF (256 aa). ATP is bound by residues 33–41 and K56; that span reads IGEGSFAKV. Residue D150 is the Proton acceptor of the active site. The segment at 168–197 is activation loop; it reads DFGLSAFAPQTKEDGLLHTACGTPNYVAPE. Residues 318 to 343 enclose the NAF domain; it reads REKPESMNAFALISRSQGFNLGNLFE. The PPI stretch occupies residues 351–380; sequence KRETSFTSQCTPQEIMSKIEEACGPLGFNV.

This sequence belongs to the protein kinase superfamily. CAMK Ser/Thr protein kinase family. SNF1 subfamily. Mn(2+) serves as cofactor.

It carries out the reaction L-seryl-[protein] + ATP = O-phospho-L-seryl-[protein] + ADP + H(+). It catalyses the reaction L-threonyl-[protein] + ATP = O-phospho-L-threonyl-[protein] + ADP + H(+). Functionally, CIPK serine-threonine protein kinases interact with CBL proteins. Binding of a CBL protein to the regulatory NAF domain of CIPK protein lead to the activation of the kinase in a calcium-dependent manner. The protein is CBL-interacting protein kinase 9 (CIPK9) of Oryza sativa subsp. japonica (Rice).